The following is a 1401-amino-acid chain: Condensin complex subunit 1 (1401 aa).

The interval 1 to 603 (MAPQMYEFHL…TVCKNKPNMS (603 aa)) is interactions with SMC2 and SMC4. A phosphoserine mark is found at S20 and S585. Residues 576–596 (STQEKNPRESTGNMVTGQTVC) are compositionally biased toward polar residues. Disordered stretches follow at residues 576-611 (STQEKNPRESTGNMVTGQTVCKNKPNMSDPEESRGN), 956-978 (REEQEHKTKDPKEKNTSSETTME), and 1303-1401 (LEIG…RHRS). The span at 956 to 971 (REEQEHKTKDPKEKNT) shows a compositional bias: basic and acidic residues. The segment covering 1308–1336 (AGSQRAPSAKKPSTGSRYQPLASTASDND) has biased composition (polar residues). Phosphoserine occurs at positions 1310, 1315, and 1330. T1331 bears the Phosphothreonine mark. Phosphoserine is present on S1333. T1339 is modified (phosphothreonine). The short motif at 1342 to 1362 (PRRTTRRHPNTQQRASKKKPK) is the Bipartite nuclear localization signal element. Residues 1345 to 1362 (TTRRHPNTQQRASKKKPK) show a composition bias toward basic residues. 5 positions are modified to phosphoserine: S1366, S1367, S1370, S1371, and S1376. Acidic residues predominate over residues 1369–1382 (ESSEEDLSAEMTED). 2 positions are modified to phosphothreonine; by CDK1: T1384 and T1389. Position 1395 is a phosphoserine (S1395).

This sequence belongs to the CND1 (condensin subunit 1) family. As to quaternary structure, component of the condensin complex, which contains the SMC2 and SMC4 heterodimer, and three non SMC subunits that probably regulate the complex: NCAPH/BRRN1, NCAPD2/CAPD2 and NCAPG. Interacts with histones H1 and H3. In terms of processing, phosphorylated by CDK1. Its phosphorylation, as well as that of NCAPH and NCAPG subunits, activates the condensin complex and is required for chromosome condensation.

It localises to the nucleus. Its subcellular location is the cytoplasm. The protein localises to the chromosome. In terms of biological role, regulatory subunit of the condensin complex, a complex required for conversion of interphase chromatin into mitotic-like condense chromosomes. The condensin complex probably introduces positive supercoils into relaxed DNA in the presence of type I topoisomerases and converts nicked DNA into positive knotted forms in the presence of type II topoisomerases. May target the condensin complex to DNA via its C-terminal domain. May promote the resolution of double-strand DNA catenanes (intertwines) between sister chromatids. Condensin-mediated compaction likely increases tension in catenated sister chromatids, providing directionality for type II topoisomerase-mediated strand exchanges toward chromatid decatenation. Required for decatenation of non-centromeric ultrafine DNA bridges during anaphase. Early in neurogenesis, may play an essential role to ensure accurate mitotic chromosome condensation in neuron stem cells, ultimately affecting neuron pool and cortex size. The protein is Condensin complex subunit 1 of Homo sapiens (Human).